The sequence spans 331 residues: Protoheme IX farnesyltransferase (331 aa).

9 consecutive transmembrane segments (helical) span residues 22–42 (LVKPKIIALLLMTTAGAMWMA), 50–70 (FGVTLLGGGMAAAAANVINMV), 100–120 (FAGILAVMSFGLLACFTNLLA), 147–167 (IVIGGAAGAIPPLVGWAAATG), 174–194 (WVMFALIFLWTPPHFWALAIL), 220–240 (ILLYALLLVPVSLLLVYPLHV), 241–261 (LGSFYLSAATLLGSLLIWKAV), 273–293 (ATSLFTFANLYLLLLCGAMGL), and 307–327 (LASLQGVYASLGALANHLGAM).

It belongs to the UbiA prenyltransferase family. Protoheme IX farnesyltransferase subfamily.

Its subcellular location is the cell inner membrane. It carries out the reaction heme b + (2E,6E)-farnesyl diphosphate + H2O = Fe(II)-heme o + diphosphate. It functions in the pathway porphyrin-containing compound metabolism; heme O biosynthesis; heme O from protoheme: step 1/1. Converts heme B (protoheme IX) to heme O by substitution of the vinyl group on carbon 2 of heme B porphyrin ring with a hydroxyethyl farnesyl side group. The sequence is that of Protoheme IX farnesyltransferase from Synechococcus sp. (strain JA-3-3Ab) (Cyanobacteria bacterium Yellowstone A-Prime).